Here is a 193-residue protein sequence, read N- to C-terminus: Acyl carrier protein phosphodiesterase (193 aa).

The protein belongs to the AcpH family.

The catalysed reaction is holo-[ACP] + H2O = apo-[ACP] + (R)-4'-phosphopantetheine + H(+). Functionally, converts holo-ACP to apo-ACP by hydrolytic cleavage of the phosphopantetheine prosthetic group from ACP. This is Acyl carrier protein phosphodiesterase from Escherichia coli O139:H28 (strain E24377A / ETEC).